Consider the following 563-residue polypeptide: Phosphomethylpyrimidine synthase (563 aa).

The interval 95 to 115 is disordered; the sequence is PGKNPSPMNNRTPVRAKQGKS. Substrate is bound by residues Asn200, Met229, Tyr258, His294, 314–316, 355–358, and Glu394; these read SRG and DALR. His398 contacts Zn(2+). Position 421 (Tyr421) interacts with substrate. Position 462 (His462) interacts with Zn(2+). Residues Cys544, Cys547, and Cys552 each coordinate [4Fe-4S] cluster.

This sequence belongs to the ThiC family. The cofactor is [4Fe-4S] cluster.

The catalysed reaction is 5-amino-1-(5-phospho-beta-D-ribosyl)imidazole + S-adenosyl-L-methionine = 4-amino-2-methyl-5-(phosphooxymethyl)pyrimidine + CO + 5'-deoxyadenosine + formate + L-methionine + 3 H(+). It participates in cofactor biosynthesis; thiamine diphosphate biosynthesis. In terms of biological role, catalyzes the synthesis of the hydroxymethylpyrimidine phosphate (HMP-P) moiety of thiamine from aminoimidazole ribotide (AIR) in a radical S-adenosyl-L-methionine (SAM)-dependent reaction. The polypeptide is Phosphomethylpyrimidine synthase (Chlorobium phaeobacteroides (strain BS1)).